The primary structure comprises 325 residues: G/U mismatch-specific uracil DNA glycosylase (325 aa).

Basic and acidic residues predominate over residues 1–11 (MNDIETRDTGT). The interval 1 to 50 (MNDIETRDTGTKNDNSSEFNLSVKSHKRKRSFDDENLELEESREETSGGI) is disordered. A compositionally biased stretch (polar residues) spans 12–23 (KNDNSSEFNLSV). The span at 34–43 (DENLELEESR) shows a compositional bias: acidic residues.

Belongs to the uracil-DNA glycosylase (UDG) superfamily. TDG/mug family.

Its subcellular location is the nucleus. It carries out the reaction Specifically hydrolyzes mismatched double-stranded DNA and polynucleotides, releasing free uracil.. Removes uracil from G/U mispairs in ssDNA. Also corrects G/G mispairs. Does not catalyze the removal of thymine from G/T mispairs. In Schizosaccharomyces pombe (strain 972 / ATCC 24843) (Fission yeast), this protein is G/U mismatch-specific uracil DNA glycosylase (thp1).